The primary structure comprises 737 residues: Zinc finger protein 184 (737 aa).

The region spanning 28–99 (VTFKDVVVNF…DSCIPVGPLE (72 aa)) is the KRAB domain. The residue at position 117 (Ser117) is a Phosphoserine. A Glycyl lysine isopeptide (Lys-Gly) (interchain with G-Cter in SUMO2) cross-link involves residue Lys185. 17 consecutive C2H2-type zinc fingers follow at residues 201 to 223 (CKCN…QRTH), 229 to 251 (YKCN…QRIH), 257 to 279 (YKCD…QRIH), 285 to 307 (YKCD…QRIH), 313 to 335 (YTCT…QKIH), 341 to 363 (FKCE…QKIH), 369 to 391 (YKCN…HMIH), 397 to 419 (YECN…QKTH), 425 to 447 (YDCA…LKIH), 453 to 475 (YKCS…RRIH), 481 to 503 (FECS…QKTH), 509 to 531 (YECK…ERIH), 537 to 559 (YQCH…KKIH), 565 to 587 (YKCN…KRIH), 593 to 615 (YACP…QKTH), 621 to 643 (YQCN…QRIH), and 649 to 671 (YKCS…RSTH). The C2H2-type 18; degenerate zinc finger occupies 677–698 (YNSECPQTFSQSTYLTQHQKIH). The segment at 704–726 (LGCEDCEKAFQCHSALTKHQRLH) adopts a C2H2-type 19 zinc-finger fold.

This sequence belongs to the krueppel C2H2-type zinc-finger protein family.

The protein resides in the nucleus. May be involved in transcriptional regulation. The sequence is that of Zinc finger protein 184 (Zfp184) from Mus musculus (Mouse).